Here is a 64-residue protein sequence, read N- to C-terminus: Chassatide C7 (64 aa).

Residues 1-35 (VLVASLVMLEAQSSDTIQVPDWGKRLLMNHDSNRV) constitute a propeptide, removed in mature form. Disulfide bonds link cysteine 39–cysteine 55, cysteine 43–cysteine 57, and cysteine 48–cysteine 62.

Expressed in fruit, pedicel, root and stem but not in leaf (at protein level).

In terms of biological role, probably participates in a plant defense mechanism. Active against E.coli ATTC25922 but not against S.aureus ATCC 12600 or S.epidermidis ATCC 14990. Has cytotoxic and hemolytic activity. This chain is Chassatide C7, found in Chassalia chartacea (Chassalia curviflora).